The primary structure comprises 400 residues: S-adenosylmethionine decarboxylase proenzyme (400 aa).

Catalysis depends on residues glutamate 18 and glutamate 21. Serine 78 (schiff-base intermediate with substrate; via pyruvic acid) is an active-site residue. Serine 78 carries the post-translational modification Pyruvic acid (Ser); by autocatalysis. Cysteine 92 functions as the Proton donor; for catalytic activity in the catalytic mechanism. Active-site proton acceptor; for processing activity residues include serine 243 and histidine 256.

Belongs to the eukaryotic AdoMetDC family. It depends on pyruvate as a cofactor. Post-translationally, is synthesized initially as an inactive proenzyme. Formation of the active enzyme involves a self-maturation process in which the active site pyruvoyl group is generated from an internal serine residue via an autocatalytic post-translational modification. Two non-identical subunits are generated from the proenzyme in this reaction, and the pyruvate is formed at the N-terminus of the alpha chain, which is derived from the carboxyl end of the proenzyme. The post-translation cleavage follows an unusual pathway, termed non-hydrolytic serinolysis, in which the side chain hydroxyl group of the serine supplies its oxygen atom to form the C-terminus of the beta chain, while the remainder of the serine residue undergoes an oxidative deamination to produce ammonia and the pyruvoyl group blocking the N-terminus of the alpha chain.

It carries out the reaction S-adenosyl-L-methionine + H(+) = S-adenosyl 3-(methylsulfanyl)propylamine + CO2. It participates in amine and polyamine biosynthesis; S-adenosylmethioninamine biosynthesis; S-adenosylmethioninamine from S-adenosyl-L-methionine: step 1/1. This Zea mays (Maize) protein is S-adenosylmethionine decarboxylase proenzyme (SAMDC).